A 544-amino-acid chain; its full sequence is Chaperonin GroEL (544 aa).

Residues 29–32, 86–90, G413, 476–478, and D492 contribute to the ATP site; these read TLGP, DGTTT, and NAL.

This sequence belongs to the chaperonin (HSP60) family. In terms of assembly, forms a cylinder of 14 subunits composed of two heptameric rings stacked back-to-back. Interacts with the co-chaperonin GroES.

The protein localises to the cytoplasm. The catalysed reaction is ATP + H2O + a folded polypeptide = ADP + phosphate + an unfolded polypeptide.. Functionally, together with its co-chaperonin GroES, plays an essential role in assisting protein folding. The GroEL-GroES system forms a nano-cage that allows encapsulation of the non-native substrate proteins and provides a physical environment optimized to promote and accelerate protein folding. This chain is Chaperonin GroEL, found in Desulfitobacterium hafniense (strain Y51).